The sequence spans 315 residues: Probable cell division protein WhiA (315 aa).

Residues 274–308 constitute a DNA-binding region (H-T-H motif); sequence SLKNLGELIPGGPISKSGINHRLRKLNEIAEKIRA.

It belongs to the WhiA family.

In terms of biological role, involved in cell division and chromosome segregation. The chain is Probable cell division protein WhiA from Ligilactobacillus salivarius (strain UCC118) (Lactobacillus salivarius).